Here is a 336-residue protein sequence, read N- to C-terminus: MSTPTGSRRIFSGVQPTSDSLHLGNALGAVAQWVGLQDDHDAFFCVVDLHAITIPQDPEALRRRTLITAAQYLALGIDPGRATIFVQSQVPAHTQLAWVLGCFTGFGQASRMTQFKDKSARQGSEATTVGLFTYPVLQAADVLAYDTELVPVGEDQRQHLELARDVAQRFNSRFPGTLVVPDVLIPKMTAKIYDLQDPTSKMSKSAGTDAGLINLLDDPALSAKKIRSAVTDSERDIRYDPDVKPGVSNLLNIQSAVTGTDIDVLVDGYAGHGYGDLKKDTAEAVVEFVNPIQARVDELTADPAELEAVLAAGAQRAHDVASKTVQRVYDRLGFLL.

ATP-binding positions include 15–17 and 24–25; these read QPT and GN. The short motif at 16-25 is the 'HIGH' region element; sequence PTSDSLHLGN. Aspartate 141 is a binding site for L-tryptophan. ATP-binding positions include 153–155, isoleucine 192, and 201–205; these read GED and KMSKS. A 'KMSKS' region motif is present at residues 201–205; that stretch reads KMSKS.

This sequence belongs to the class-I aminoacyl-tRNA synthetase family. Homodimer.

The protein resides in the cytoplasm. It catalyses the reaction tRNA(Trp) + L-tryptophan + ATP = L-tryptophyl-tRNA(Trp) + AMP + diphosphate + H(+). Functionally, catalyzes the attachment of tryptophan to tRNA(Trp). This Mycobacterium tuberculosis (strain CDC 1551 / Oshkosh) protein is Tryptophan--tRNA ligase.